The chain runs to 258 residues: Acyl-[acyl-carrier-protein]--UDP-N-acetylglucosamine O-acyltransferase (258 aa).

This sequence belongs to the transferase hexapeptide repeat family. LpxA subfamily. As to quaternary structure, homotrimer.

It is found in the cytoplasm. It carries out the reaction a (3R)-hydroxyacyl-[ACP] + UDP-N-acetyl-alpha-D-glucosamine = a UDP-3-O-[(3R)-3-hydroxyacyl]-N-acetyl-alpha-D-glucosamine + holo-[ACP]. It participates in glycolipid biosynthesis; lipid IV(A) biosynthesis; lipid IV(A) from (3R)-3-hydroxytetradecanoyl-[acyl-carrier-protein] and UDP-N-acetyl-alpha-D-glucosamine: step 1/6. Its function is as follows. Involved in the biosynthesis of lipid A, a phosphorylated glycolipid that anchors the lipopolysaccharide to the outer membrane of the cell. The protein is Acyl-[acyl-carrier-protein]--UDP-N-acetylglucosamine O-acyltransferase of Pseudomonas putida (strain ATCC 47054 / DSM 6125 / CFBP 8728 / NCIMB 11950 / KT2440).